The chain runs to 410 residues: Arginine deiminase (410 aa).

Cys-400 functions as the Amidino-cysteine intermediate in the catalytic mechanism.

The protein belongs to the arginine deiminase family.

The protein localises to the cytoplasm. The enzyme catalyses L-arginine + H2O = L-citrulline + NH4(+). The protein operates within amino-acid degradation; L-arginine degradation via ADI pathway; carbamoyl phosphate from L-arginine: step 1/2. The sequence is that of Arginine deiminase from Streptococcus agalactiae serotype III (strain NEM316).